We begin with the raw amino-acid sequence, 405 residues long: 3-hydroxy-3-methylglutaryl-coenzyme A reductase (405 aa).

Residues E100 and D310 each act as charge relay system in the active site. Catalysis depends on H400, which acts as the Proton donor.

The protein belongs to the HMG-CoA reductase family.

It catalyses the reaction (R)-mevalonate + 2 NADP(+) + CoA = (3S)-3-hydroxy-3-methylglutaryl-CoA + 2 NADPH + 2 H(+). Its pathway is metabolic intermediate biosynthesis; (R)-mevalonate biosynthesis; (R)-mevalonate from acetyl-CoA: step 3/3. In terms of biological role, converts HMG-CoA to mevalonate. This Methanocaldococcus jannaschii (strain ATCC 43067 / DSM 2661 / JAL-1 / JCM 10045 / NBRC 100440) (Methanococcus jannaschii) protein is 3-hydroxy-3-methylglutaryl-coenzyme A reductase (hmgA).